The sequence spans 298 residues: Inosose dehydratase (298 aa).

This sequence belongs to the IolE/MocC family. Requires glutathione as cofactor. Co(2+) serves as cofactor. Mn(2+) is required as a cofactor.

The catalysed reaction is scyllo-inosose = 3D-3,5/4-trihydroxycyclohexane-1,2-dione + H2O. Functionally, catalyzes the dehydration of inosose (2-keto-myo-inositol, 2KMI or 2,4,6/3,5-pentahydroxycyclohexanone) to 3D-(3,5/4)-trihydroxycyclohexane-1,2-dione (D-2,3-diketo-4-deoxy-epi-inositol). The protein is Inosose dehydratase of Erwinia tasmaniensis (strain DSM 17950 / CFBP 7177 / CIP 109463 / NCPPB 4357 / Et1/99).